The following is a 248-amino-acid chain: Mannose-binding protein C (248 aa).

Residues 1 to 20 (MSLFPSLPLLLLSMVAASYS) form the signal peptide. In terms of domain architecture, Collagen-like spans 42–99 (GINGFPGKDGRDGTKGEKGEPGQGLRGLQGPPGKLGPPGNPGPSGSPGPKGQKGDPGK). A disordered region spans residues 43–113 (INGFPGKDGR…DSSLAASERK (71 aa)). Hydroxyproline is present on Pro47. The segment covering 49–61 (KDGRDGTKGEKGE) has biased composition (basic and acidic residues). Residues Pro73, Pro79, Pro82, and Pro88 each carry the hydroxyproline modification. Positions 75–87 (KLGPPGNPGPSGS) are enriched in pro residues. Positions 93-102 (QKGDPGKSPD) are enriched in basic and acidic residues. Residues 112–130 (RKALQTEMARIKKWLTFSL) adopt a coiled-coil conformation. The 112-residue stretch at 134 to 245 (VGNKFFLTNG…CSTSHLAVCE (112 aa)) folds into the C-type lectin domain. Disulfide bonds link Cys155-Cys244 and Cys222-Cys236.

In terms of assembly, oligomeric complex of 3 or more homotrimers. Interacts with MASP1 and MASP2. Interacts with MEP1A and MEP1B and may inhibit their catalytic activity. Interacts with CR1 (via Sushi 24 and Sushi 25 domains). (Microbial infection) Interacts with SARS coronavirus-2/SARS-CoV-2 Spike glycoprotein homotrimer; the interaction is calcium-dependent and modulated by Spike glycoprotein glycosylation state. As to expression, plasma protein produced mainly in the liver.

Its subcellular location is the secreted. Functionally, calcium-dependent lectin involved in innate immune defense. Binds mannose, fucose and N-acetylglucosamine on different microorganisms and activates the lectin complement pathway. Binds to late apoptotic cells, as well as to apoptotic blebs and to necrotic cells, but not to early apoptotic cells, facilitating their uptake by macrophages. May bind DNA. Upon SARS coronavirus-2/SARS-CoV-2 infection, activates the complement lectin pathway which leads to the inhibition SARS-CoV-2 infection and a reduction of the induced inflammatory response. The polypeptide is Mannose-binding protein C (Homo sapiens (Human)).